The primary structure comprises 250 residues: MVTGRSAQLCLALLFMSLDVILTATEKSVLTLDPPWIRIFTGEKVTLSCYGNNHLQMNSTTKWIHNGTVSEVNSSHLVIVSATVQDSGKYICQKQGLFKSKPVYLNVTQDWLLLQTSADMVLVHGSFDIRCHGWKNWNVRKVIYYRNDHAFNYSYESPVSIREATLNDSGTYHCKGYLRQVKYESDKFRIAVVKAYKCKYYWLQLIFPLLVAILFAVDTGLLLSTEEQFKSVLEIQKTGKYKKVETELLT.

The N-terminal stretch at 1-23 is a signal peptide; that stretch reads MVTGRSAQLCLALLFMSLDVILT. The Extracellular portion of the chain corresponds to 24–204; the sequence is ATEKSVLTLD…AYKCKYYWLQ (181 aa). Residues 28-104 enclose the Ig-like 1 domain; it reads SVLTLDPPWI…QGLFKSKPVY (77 aa). Cysteines 49 and 92 form a disulfide. 6 N-linked (GlcNAc...) asparagine glycosylation sites follow: Asn-58, Asn-66, Asn-73, Asn-106, Asn-152, and Asn-167. Residues 114 to 181 enclose the Ig-like 2 domain; the sequence is LQTSADMVLV…YHCKGYLRQV (68 aa). A disulfide bridge links Cys-131 with Cys-174. A helical transmembrane segment spans residues 205 to 223; sequence LIFPLLVAILFAVDTGLLL. The Cytoplasmic portion of the chain corresponds to 224–250; that stretch reads STEEQFKSVLEIQKTGKYKKVETELLT.

In terms of assembly, tetramer of an alpha chain, a beta chain, and two disulfide linked gamma chains. Interacts with IGHE (via CH3 region). As to expression, expressed in bone marrow mast cells, as well as in the pineal gland at night.

Its subcellular location is the cell membrane. High-affinity receptor for immunoglobulin epsilon/IgE. Mediates IgE effector functions in myeloid cells. Upon IgE binding and antigen/allergen cross-linking initiates signaling pathways that lead to myeloid cell activation and differentiation. On mast cells, basophils and eosinophils stimulates the secretion of vasoactive amines, lipid mediators and cytokines that contribute to inflammatory response, tissue remodeling and cytotoxicity against microbes. Triggers the immediate hypersensitivity response to allergens as a host defense mechanism against helminth parasites, pathogenic bacteria and venom toxicity. When dysregulated, it can elicit harmful life-threatening allergic and anaphylactic reactions. This is High affinity immunoglobulin epsilon receptor subunit alpha (Fcer1a) from Mus musculus (Mouse).